The following is a 198-amino-acid chain: V-type proton ATPase subunit E (198 aa).

This sequence belongs to the V-ATPase E subunit family.

Functionally, produces ATP from ADP in the presence of a proton gradient across the membrane. The chain is V-type proton ATPase subunit E from Borrelia duttonii (strain Ly).